The sequence spans 452 residues: Pup--protein ligase (452 aa).

E9 lines the Mg(2+) pocket. ATP is bound at residue R53. Mg(2+) is bound at residue Y55. The active-site Proton acceptor is D57. Position 63 (E63) interacts with Mg(2+). ATP is bound by residues T66 and W419.

It belongs to the Pup ligase/Pup deamidase family. Pup-conjugating enzyme subfamily.

The catalysed reaction is ATP + [prokaryotic ubiquitin-like protein]-L-glutamate + [protein]-L-lysine = ADP + phosphate + N(6)-([prokaryotic ubiquitin-like protein]-gamma-L-glutamyl)-[protein]-L-lysine.. It participates in protein degradation; proteasomal Pup-dependent pathway. The protein operates within protein modification; protein pupylation. Functionally, catalyzes the covalent attachment of the prokaryotic ubiquitin-like protein modifier Pup to the proteasomal substrate proteins, thereby targeting them for proteasomal degradation. This tagging system is termed pupylation. The ligation reaction involves the side-chain carboxylate of the C-terminal glutamate of Pup and the side-chain amino group of a substrate lysine. The chain is Pup--protein ligase from Frankia alni (strain DSM 45986 / CECT 9034 / ACN14a).